The primary structure comprises 319 residues: 7,8-didemethyl-8-hydroxy-5-deazariboflavin synthase (319 aa).

A Radical SAM core domain is found at 5–236 (VTYSPAYTIV…SNITLQIPPN (232 aa)). Cysteine 19, cysteine 23, and cysteine 26 together coordinate [4Fe-4S] cluster.

Belongs to the radical SAM superfamily. CofG family. As to quaternary structure, consists of two subunits, CofG and CofH. [4Fe-4S] cluster is required as a cofactor.

It catalyses the reaction 5-amino-5-(4-hydroxybenzyl)-6-(D-ribitylimino)-5,6-dihydrouracil + S-adenosyl-L-methionine = 7,8-didemethyl-8-hydroxy-5-deazariboflavin + 5'-deoxyadenosine + L-methionine + NH4(+) + H(+). The protein operates within cofactor biosynthesis; coenzyme F0 biosynthesis. In terms of biological role, catalyzes the radical-mediated synthesis of 7,8-didemethyl-8-hydroxy-5-deazariboflavin from 5-amino-5-(4-hydroxybenzyl)-6-(D-ribitylimino)-5,6-dihydrouracil. In Trichodesmium erythraeum (strain IMS101), this protein is 7,8-didemethyl-8-hydroxy-5-deazariboflavin synthase.